A 326-amino-acid chain; its full sequence is ELAV-like protein 1 (326 aa).

At S2 the chain carries N-acetylserine. S2 carries the post-translational modification Phosphoserine. The 79-residue stretch at 20-98 folds into the RRM 1 domain; the sequence is TNLIVNYLPQ…KTIKVSYARP (79 aa). 2 positions are modified to phosphoserine: S100 and S158. Residues 106-186 form the RRM 2 domain; sequence ANLYISGLPR…EPITVKFAAN (81 aa). A Glycyl lysine isopeptide (Lys-Gly) (interchain with G-Cter in SUMO2) cross-link involves residue K191. 2 positions are modified to phosphoserine: S197 and S202. An Omega-N-methylarginine modification is found at R206. R217 carries the post-translational modification Asymmetric dimethylarginine; by CARM1; alternate. Position 217 is an omega-N-methylarginine; alternate (R217). Phosphoserine is present on residues S221 and S318. One can recognise an RRM 3 domain in the interval 244–322; it reads WCIFIYNLGQ…KILQVSFKTN (79 aa).

It belongs to the RRM elav family. In terms of assembly, monomer and homodimer (in vitro). Interacts with ANP32A. Interacts with ZNF385A; the interaction is indirect and mRNA-dependent and may regulate p53/TP53 expression. Identified in a mRNP complex, at least composed of DHX9, DDX3X, ELAVL1, HNRNPU, IGF2BP1, ILF3, PABPC1, PCBP2, PTBP2, STAU1, STAU2, SYNCRIP and YBX1. Interacts with AGO1 and AGO2. Interacts with IGF2BP1. Interacts with IGF2BP2 and IGF2BP3. Interacts with HNRNPL. Interacts with DHX36; this interaction occurs in a RNA-dependent manner. Interacts with ILF3; this interaction occurs in a RNA-dependent manner. Interacts with PLEKHN1. Interacts with SHFL; the interaction increases in presence of RNA. Interacts with YBX1; interaction recruits ELAVL1 on C5-methylcytosine (m5C)-containing mRNAs, thereby promoting mRNA stability. Interacts with FXR1. Post-translationally, phosphorylated by MAPKAPK2. Phosphorylated by PRKCD. Methylated at Arg-217 by CARM1 in T-cells in response to LPS challenge.

It localises to the cytoplasm. The protein localises to the nucleus. The protein resides in the stress granule. Its subcellular location is the P-body. In terms of biological role, RNA-binding protein that binds to the 3'-UTR region of mRNAs and increases their stability. Involved in embryonic stem cell (ESC) differentiation: preferentially binds mRNAs that are not methylated by N6-methyladenosine (m6A), stabilizing them, promoting ESC differentiation. Has also been shown to be capable of binding to m6A-containing mRNAs and contributes to MYC stability by binding to m6A-containing MYC mRNAs. Binds to poly-U elements and AU-rich elements (AREs) in the 3'-UTR of target mRNAs. Binds avidly to the AU-rich element in FOS and IL3/interleukin-3 mRNAs. In the case of the FOS AU-rich element, binds to a core element of 27 nucleotides that contain AUUUA, AUUUUA, and AUUUUUA motifs. Binds preferentially to the 5'-UUUU[AG]UUU-3' motif in vitro. With ZNF385A, binds the 3'-UTR of p53/TP53 mRNA to control their nuclear export induced by CDKN2A. Hence, may regulate p53/TP53 expression and mediate in part the CDKN2A anti-proliferative activity. May also bind with ZNF385A the CCNB1 mRNA. Increases the stability of the leptin mRNA harboring an AU-rich element (ARE) in its 3' UTR. The polypeptide is ELAV-like protein 1 (Elavl1) (Mus musculus (Mouse)).